A 623-amino-acid chain; its full sequence is Xaa-Pro aminopeptidase 1 (623 aa).

Residue Arg77 participates in a peptide binding. Position 304 is an N6-acetyllysine (Lys304). His395 is a binding site for a peptide. Residues Asp415, Asp426, and His489 each contribute to the Mn(2+) site. Residues His489, His498, and Glu523 each contribute to the a peptide site. Mn(2+) is bound by residues Glu523 and Glu537.

This sequence belongs to the peptidase M24B family. In terms of assembly, homodimer. Requires Mn(2+) as cofactor. As to expression, expressed in all tissues tested, including liver, adrenal decapsular tissue, adrenal capsular tissue, corpus luteum, testis, submandibular gland, thymus, brain, cerebellum and heart. Highest levels in testis.

The protein resides in the cytoplasm. It carries out the reaction Release of any N-terminal amino acid, including proline, that is linked to proline, even from a dipeptide or tripeptide.. Inhibited by inositol hexakisphosphate. Metalloaminopeptidase that catalyzes the removal of a penultimate prolyl residue from the N-termini of peptides, such as Arg-Pro-Pro. Contributes to the degradation of bradykinin. In Rattus norvegicus (Rat), this protein is Xaa-Pro aminopeptidase 1.